The chain runs to 284 residues: Tropomyosin (284 aa).

Residues 1–284 adopt a coiled-coil conformation; the sequence is MDAIKKKMQA…DQTFQELFGY (284 aa). A compositionally biased stretch (basic and acidic residues) spans 113–142; it reads LEKATHTADESDRVRKVMENRSFQDEERAN. The interval 113 to 143 is disordered; sequence LEKATHTADESDRVRKVMENRSFQDEERANT.

The protein belongs to the tropomyosin family.

Tropomyosin, in association with the troponin complex, plays a central role in the calcium dependent regulation of muscle contraction. This Acanthocheilonema viteae (Filarial nematode worm) protein is Tropomyosin.